The primary structure comprises 227 residues: Cytochrome c oxidase subunit 2 (227 aa).

Residues 1–14 are Mitochondrial intermembrane-facing; it reads MAYPFQMGLQDATS. The chain crosses the membrane as a helical span at residues 15–45; the sequence is PIMEELLHFHDHTLMIVFLISSLVLYIISLM. The Mitochondrial matrix segment spans residues 46–59; that stretch reads LTTKLTHTSTMDAQ. A helical transmembrane segment spans residues 60–87; that stretch reads EVETIWTILPAIILILIALPSLRILYMM. The Mitochondrial intermembrane portion of the chain corresponds to 88–227; it reads DEINNPSLTV…HFEKWSASLL (140 aa). 6 residues coordinate Cu cation: histidine 161, cysteine 196, glutamate 198, cysteine 200, histidine 204, and methionine 207. Glutamate 198 contacts Mg(2+).

It belongs to the cytochrome c oxidase subunit 2 family. As to quaternary structure, component of the cytochrome c oxidase (complex IV, CIV), a multisubunit enzyme composed of 14 subunits. The complex is composed of a catalytic core of 3 subunits MT-CO1, MT-CO2 and MT-CO3, encoded in the mitochondrial DNA, and 11 supernumerary subunits COX4I, COX5A, COX5B, COX6A, COX6B, COX6C, COX7A, COX7B, COX7C, COX8 and NDUFA4, which are encoded in the nuclear genome. The complex exists as a monomer or a dimer and forms supercomplexes (SCs) in the inner mitochondrial membrane with NADH-ubiquinone oxidoreductase (complex I, CI) and ubiquinol-cytochrome c oxidoreductase (cytochrome b-c1 complex, complex III, CIII), resulting in different assemblies (supercomplex SCI(1)III(2)IV(1) and megacomplex MCI(2)III(2)IV(2)). Found in a complex with TMEM177, COA6, COX18, COX20, SCO1 and SCO2. Interacts with TMEM177 in a COX20-dependent manner. Interacts with COX20. Interacts with COX16. Cu cation serves as cofactor.

The protein localises to the mitochondrion inner membrane. The enzyme catalyses 4 Fe(II)-[cytochrome c] + O2 + 8 H(+)(in) = 4 Fe(III)-[cytochrome c] + 2 H2O + 4 H(+)(out). Component of the cytochrome c oxidase, the last enzyme in the mitochondrial electron transport chain which drives oxidative phosphorylation. The respiratory chain contains 3 multisubunit complexes succinate dehydrogenase (complex II, CII), ubiquinol-cytochrome c oxidoreductase (cytochrome b-c1 complex, complex III, CIII) and cytochrome c oxidase (complex IV, CIV), that cooperate to transfer electrons derived from NADH and succinate to molecular oxygen, creating an electrochemical gradient over the inner membrane that drives transmembrane transport and the ATP synthase. Cytochrome c oxidase is the component of the respiratory chain that catalyzes the reduction of oxygen to water. Electrons originating from reduced cytochrome c in the intermembrane space (IMS) are transferred via the dinuclear copper A center (CU(A)) of subunit 2 and heme A of subunit 1 to the active site in subunit 1, a binuclear center (BNC) formed by heme A3 and copper B (CU(B)). The BNC reduces molecular oxygen to 2 water molecules using 4 electrons from cytochrome c in the IMS and 4 protons from the mitochondrial matrix. The polypeptide is Cytochrome c oxidase subunit 2 (MT-CO2) (Ailurus fulgens (Himalayan red panda)).